The primary structure comprises 146 residues: Angiogenin (146 aa).

The signal sequence occupies residues 1–24 (MVMGLHLLLLVFILGLGLTPPTLA). Glutamine 25 carries the pyrrolidone carboxylic acid modification. The active-site Proton acceptor is the histidine 37. 3 disulfide bridges follow: cysteine 50-cysteine 105, cysteine 63-cysteine 116, and cysteine 81-cysteine 131. Positions 55–59 (RLRNM) match the Nucleolar localization signal motif. Cysteine 105 serves as a coordination point for tRNA. The active-site Proton donor is histidine 138.

It belongs to the pancreatic ribonuclease family. As to quaternary structure, homodimer. Interacts with RNH1; inhibiting ANG ribonuclease activity. Interacts with PCNA.

The protein localises to the secreted. The protein resides in the nucleus. Its subcellular location is the nucleolus. It localises to the cytoplasm. It is found in the stress granule. With respect to regulation, has weak tRNA ribonuclease activity by itself due to partial autoinhibition by its C-terminus, which folds into a short alpha-helix that partially occludes the substrate-binding site. In absence of stress, the ribonuclease activity is inhibited by RNH1 in the cytoplasm. In response to stress, dissociates from RNH1 in the cytoplasm and associates with cytoplasmic ribosomes with vacant A-sites: ribosomes directly activate the tRNA ribonuclease activity of ANG by refolding the C-terminal alpha-helix. In response to stress, the angiogenic activity of ANG is inhibited by RNH1 in the nucleus. In terms of biological role, secreted ribonuclease that can either promote or restrict cell proliferation of target cells, depending on the context. Endocytosed in target cells via its receptor PLXNB2 and translocates to the cytoplasm or nucleus. Under stress conditions, localizes to the cytoplasm and promotes the assembly of stress granules (SGs): specifically cleaves a subset of tRNAs within anticodon loops to produce tRNA-derived stress-induced fragments (tiRNAs), resulting in translation repression and inhibition of cell proliferation. tiRNas also prevent formation of apoptosome, thereby promoting cell survival. Preferentially cleaves RNAs between a pyrimidine and an adenosine residue, suggesting that it cleaves the anticodon loop of tRNA(Ala) (32-UUAGCAU-38) after positions 33 and 36. Cleaves a subset of tRNAs, including tRNA(Ala), tRNA(Glu), tRNA(Gly), tRNA(Lys), tRNA(Val), tRNA(His), tRNA(Asp) and tRNA(Sec). Under growth conditions and in differentiated cells, translocates to the nucleus and stimulates ribosomal RNA (rRNA) transcription, including that containing the initiation site sequences of 45S rRNA, thereby promoting cell growth and proliferation. Angiogenin induces vascularization of normal and malignant tissues via its ability to promote rRNA transcription. Involved in hematopoietic stem and progenitor cell (HSPC) growth and survival by promoting rRNA transcription in growth conditions and inhibiting translation in response to stress, respectively. Mediates the crosstalk between myeloid and intestinal epithelial cells to protect the intestinal epithelial barrier integrity: secreted by myeloid cells and promotes intestinal epithelial cells proliferation and survival. Also mediates osteoclast-endothelial cell crosstalk in growing bone: produced by osteoclasts and protects the neighboring vascular cells against senescence by promoting rRNA transcription. This Aotus trivirgatus (Three-striped night monkey) protein is Angiogenin (ANG).